The chain runs to 114 residues: FK506-binding protein 1 (114 aa).

In terms of domain architecture, PPIase FKBP-type spans 26–114 (GDLVTIHYTG…VFDVELLKIN (89 aa)).

The protein belongs to the FKBP-type PPIase family. FKBP1 subfamily.

The protein localises to the cytoplasm. It carries out the reaction [protein]-peptidylproline (omega=180) = [protein]-peptidylproline (omega=0). Inhibited by both FK506 and rapamycin. Its function is as follows. PPIases accelerate the folding of proteins. It catalyzes the cis-trans isomerization of proline imidic peptide bonds in oligopeptides. The polypeptide is FK506-binding protein 1 (FPR1) (Kluyveromyces lactis (strain ATCC 8585 / CBS 2359 / DSM 70799 / NBRC 1267 / NRRL Y-1140 / WM37) (Yeast)).